A 457-amino-acid polypeptide reads, in one-letter code: Zinc finger protein ZIPIC (457 aa).

In terms of domain architecture, ZAD spans 3–84 (CCICQFSVRV…ILELIHSPYM (82 aa)). 6 consecutive C2H2-type zinc fingers follow at residues 257–280 (IQCP…KREH), 284–306 (YVCD…LQNH), 312–334 (FACP…MAWH), 340–362 (YQCD…KMIH), 369–391 (LECQ…MRSH), and 397–419 (FACP…LREH). Residues 430–448 (FHCSKCTHTFINEQNYDAH) form a C2H2-type 7; degenerate zinc finger.

In terms of assembly, interacts (via region between the ZAD domain and the first zinc finger domain) with Cp190 (via centrosomal targeting M domain); the interaction is direct. Interacts with pita.

The protein resides in the nucleus. The protein localises to the chromosome. Insulator DNA-binding protein. Recruits Cp190 and cooperatively binds to chromatin promoter regions to exert transcriptional regulator and chromatin insulator functions. Chromatin insulators are regulatory elements that establish independent domains of transcriptional activity within eukaryotic genomes. Insulators are proposed to structure the chromatin fiber into independent domains of differing transcriptional potential by promoting the formation of distinct chromatin loops to form topologically associating domains (TADs). Chromatin binding sites often cluster with those of other insulator DNA-binding proteins such as pita, CTCF and BEAF-32, but not Su(Hw). In Drosophila melanogaster (Fruit fly), this protein is Zinc finger protein ZIPIC.